A 141-amino-acid chain; its full sequence is Nucleoside diphosphate kinase (141 aa).

Residues lysine 11, phenylalanine 59, arginine 87, threonine 93, arginine 104, and asparagine 114 each contribute to the ATP site. Histidine 117 (pros-phosphohistidine intermediate) is an active-site residue.

Belongs to the NDK family. In terms of assembly, homotetramer. The cofactor is Mg(2+).

Its subcellular location is the cytoplasm. It catalyses the reaction a 2'-deoxyribonucleoside 5'-diphosphate + ATP = a 2'-deoxyribonucleoside 5'-triphosphate + ADP. The catalysed reaction is a ribonucleoside 5'-diphosphate + ATP = a ribonucleoside 5'-triphosphate + ADP. Functionally, major role in the synthesis of nucleoside triphosphates other than ATP. The ATP gamma phosphate is transferred to the NDP beta phosphate via a ping-pong mechanism, using a phosphorylated active-site intermediate. The sequence is that of Nucleoside diphosphate kinase from Nitrosomonas europaea (strain ATCC 19718 / CIP 103999 / KCTC 2705 / NBRC 14298).